The chain runs to 354 residues: Probable serine acetyltransferase 2 (354 aa).

It belongs to the transferase hexapeptide repeat family. As to quaternary structure, homomultimer.

It catalyses the reaction L-serine + acetyl-CoA = O-acetyl-L-serine + CoA. Its pathway is amino-acid biosynthesis; L-cysteine biosynthesis; L-cysteine from L-serine: step 1/2. The chain is Probable serine acetyltransferase 2 (SAT2) from Oryza sativa subsp. japonica (Rice).